A 652-amino-acid polypeptide reads, in one-letter code: Sodium-dependent phosphate transporter 2 (652 aa).

The Extracellular segment spans residues Met1–Glu5. Residues Tyr6–Ala26 traverse the membrane as a helical segment. The Cytoplasmic segment spans residues Asn27 to Gln46. A helical transmembrane segment spans residues Ala47–Gly67. The Extracellular segment spans residues Glu68–Thr86. A glycan (N-linked (GlcNAc...) asparagine) is linked at Asn81. A helical transmembrane segment spans residues Leu87–Phe107. Residues Leu108–Arg109 are Cytoplasmic-facing. A helical transmembrane segment spans residues Leu110–Ile130. The Extracellular portion of the chain corresponds to Gly131–Lys142. Residues Ile143–Val163 form a helical membrane-spanning segment. The Cytoplasmic segment spans residues Leu164 to Thr190. Residues Ile191–Pro211 traverse the membrane as a helical segment. Residues Met212 to Trp213 are Extracellular-facing. The chain crosses the membrane as a helical span at residues Ala214–Val234. Topologically, residues Cys235–Glu482 are cytoplasmic. 4 positions are modified to phosphoserine: Ser253, Ser256, Ser259, and Ser268. The disordered stretch occupies residues Glu273–Pro307. A compositionally biased stretch (polar residues) spans Leu295 to Gly304. A phosphoserine mark is found at Ser316 and Ser385. Residues Ser458–Glu477 form a disordered region. Residues Val483–Gly503 form a helical membrane-spanning segment. At Gly504–Ala530 the chain is on the extracellular side. A helical transmembrane segment spans residues Ala531–Trp551. Over Gly552–Gly571 the chain is Cytoplasmic. The helical transmembrane segment at Phe572–Ser586 threads the bilayer. The Extracellular portion of the chain corresponds to Asn587–Ser593. Residues Thr594 to Arg609 form a helical membrane-spanning segment. Topologically, residues Ser610 to Asn621 are cytoplasmic. A helical membrane pass occupies residues Ile622–Ala642. The Extracellular portion of the chain corresponds to Leu643–Val652.

It belongs to the inorganic phosphate transporter (PiT) (TC 2.A.20) family. As to quaternary structure, homodimer. In terms of tissue distribution, ubiquitously expressed.

It is found in the cell membrane. The protein resides in the apical cell membrane. The catalysed reaction is 2 Na(+)(out) + phosphate(out) = 2 Na(+)(in) + phosphate(in). In terms of biological role, sodium-phosphate symporter which preferentially transports the monovalent form of phosphate with a stoichiometry of two sodium ions per phosphate ion. Plays a critical role in the determination of bone quality and strength by providing phosphate for bone mineralization. Required to maintain normal cerebrospinal fluid phosphate levels. Mediates phosphate-induced calcification of vascular smooth muscle cells (VCMCs) and can functionally compensate for loss of SLC20A1 in VCMCs. (Microbial infection) Functions as a retroviral receptor and confers human cells susceptibility to infection to amphotropic murine leukemia virus (A-MuLV), 10A1 murine leukemia virus (10A1 MLV) and some feline leukemia virus subgroup B (FeLV-B) variants. This is Sodium-dependent phosphate transporter 2 (SLC20A2) from Homo sapiens (Human).